The chain runs to 406 residues: 2,3-bisphosphoglycerate-independent phosphoglycerate mutase (406 aa).

This sequence belongs to the BPG-independent phosphoglycerate mutase family. A-PGAM subfamily.

The enzyme catalyses (2R)-2-phosphoglycerate = (2R)-3-phosphoglycerate. Its pathway is carbohydrate degradation; glycolysis; pyruvate from D-glyceraldehyde 3-phosphate: step 3/5. In terms of biological role, catalyzes the interconversion of 2-phosphoglycerate and 3-phosphoglycerate. This Methanococcus maripaludis (strain C5 / ATCC BAA-1333) protein is 2,3-bisphosphoglycerate-independent phosphoglycerate mutase.